A 367-amino-acid chain; its full sequence is Quinolinate synthase (367 aa).

His-46 and Ser-63 together coordinate iminosuccinate. Cys-110 provides a ligand contact to [4Fe-4S] cluster. Iminosuccinate-binding positions include 141 to 143 and Ser-162; that span reads YVN. Residue Cys-229 coordinates [4Fe-4S] cluster. Iminosuccinate-binding positions include 255–257 and Thr-272; that span reads HPE. Cys-319 provides a ligand contact to [4Fe-4S] cluster.

The protein belongs to the quinolinate synthase family. Type 3 subfamily. [4Fe-4S] cluster is required as a cofactor.

The protein localises to the cytoplasm. The enzyme catalyses iminosuccinate + dihydroxyacetone phosphate = quinolinate + phosphate + 2 H2O + H(+). It participates in cofactor biosynthesis; NAD(+) biosynthesis; quinolinate from iminoaspartate: step 1/1. In terms of biological role, catalyzes the condensation of iminoaspartate with dihydroxyacetone phosphate to form quinolinate. This Bacillus velezensis (strain DSM 23117 / BGSC 10A6 / LMG 26770 / FZB42) (Bacillus amyloliquefaciens subsp. plantarum) protein is Quinolinate synthase.